The chain runs to 481 residues: (S)-N-methylcoclaurine 3'-hydroxylase isozyme 1 (481 aa).

Cys-423 provides a ligand contact to heme.

Belongs to the cytochrome P450 family. It depends on heme as a cofactor. Restricted to the parietal region of sieve elements adjacent or proximal to laticifers in roots, stems, leaves, carpels and hypocotyls.

Its subcellular location is the endoplasmic reticulum. It catalyses the reaction (S)-N-methylcoclaurine + reduced [NADPH--hemoprotein reductase] + O2 = (S)-3'-hydroxy-N-methylcoclaurine + oxidized [NADPH--hemoprotein reductase] + H2O + H(+). It functions in the pathway alkaloid biosynthesis; (S)-reticuline biosynthesis; (S)-reticuline from (S)-norcoclaurine: step 3/4. In terms of biological role, cytochrome P450 monooxygenase involved in the biosynthesis of benzylisoquinoline alkaloids. Catalyzes the 3'-hydroxylation of (S)-N-methylcoclaurine. This Papaver somniferum (Opium poppy) protein is (S)-N-methylcoclaurine 3'-hydroxylase isozyme 1.